Here is a 1788-residue protein sequence, read N- to C-terminus: Laminin subunit beta-1 (1788 aa).

Residues 1–24 (MLELRLIVVIVLALLSWQWDPVDS) form the signal peptide. The interval 23 to 43 (DSQRPPQHGRRDRPKYPPNKF) is disordered. Residues 50–287 (ERSSCYPATG…GISNMVVRGS (238 aa)) enclose the Laminin N-terminal domain. N-linked (GlcNAc...) asparagine glycans are attached at residues asparagine 138, asparagine 201, and asparagine 232. 19 disulfides stabilise this stretch: cysteine 288-cysteine 297, cysteine 290-cysteine 318, cysteine 320-cysteine 329, cysteine 332-cysteine 352, cysteine 355-cysteine 364, cysteine 357-cysteine 382, cysteine 385-cysteine 394, cysteine 397-cysteine 415, cysteine 418-cysteine 431, cysteine 420-cysteine 446, cysteine 448-cysteine 457, cysteine 460-cysteine 475, cysteine 478-cysteine 491, cysteine 480-cysteine 498, cysteine 500-cysteine 509, cysteine 512-cysteine 526, cysteine 529-cysteine 541, cysteine 531-cysteine 548, and cysteine 550-cysteine 559. 4 consecutive Laminin EGF-like domains span residues 288–354 (CSCY…ACKK), 355–417 (CECN…VCQP), 418–477 (CDCD…GCEP), and 478–528 (CTCN…GCSL). Asparagine 487 carries an N-linked (GlcNAc...) asparagine glycan. Residues 529-559 (CNCDAGGSYDNYCDVISGQCRCRPHMTGRSC) enclose the Laminin EGF-like 5; truncated domain. A Laminin IV type B domain is found at 567–783 (FIPLLPEVHE…LDNILSVFVH (217 aa)). A glycan (N-linked (GlcNAc...) asparagine) is linked at asparagine 591. The short motif at 641–643 (RGD) is the Cell attachment site element. Cystine bridges form between cysteine 789/cysteine 801, cysteine 791/cysteine 808, cysteine 810/cysteine 819, cysteine 822/cysteine 834, cysteine 837/cysteine 849, cysteine 839/cysteine 856, cysteine 858/cysteine 867, cysteine 870/cysteine 880, cysteine 883/cysteine 892, cysteine 885/cysteine 899, cysteine 902/cysteine 911, cysteine 914/cysteine 930, cysteine 933/cysteine 949, cysteine 935/cysteine 960, cysteine 962/cysteine 971, cysteine 974/cysteine 988, cysteine 991/cysteine 1005, cysteine 993/cysteine 1012, cysteine 1015/cysteine 1024, cysteine 1027/cysteine 1040, cysteine 1043/cysteine 1057, cysteine 1045/cysteine 1064, cysteine 1066/cysteine 1075, cysteine 1078/cysteine 1091, cysteine 1094/cysteine 1106, cysteine 1096/cysteine 1113, cysteine 1115/cysteine 1124, cysteine 1127/cysteine 1139, cysteine 1142/cysteine 1154, cysteine 1144/cysteine 1161, cysteine 1163/cysteine 1172, and cysteine 1175/cysteine 1186. Laminin EGF-like domains lie at 789–836 (CNCN…GCKA), 837–882 (CDCN…ECRV), 883–932 (CQCN…GCRP), 933–990 (CRCP…TCSK), 991–1042 (CECS…NCQQ), 1043–1093 (CECD…GCES), 1094–1141 (CNCD…KCQP), and 1142–1188 (CECD…HCSP). Asparagine 1051 carries N-linked (GlcNAc...) asparagine glycosylation. The domain II stretch occupies residues 1189–1405 (CGECFNNWDL…SQIPELNNQV (217 aa)). N-linked (GlcNAc...) asparagine glycosylation is found at asparagine 1246, asparagine 1301, asparagine 1330, and asparagine 1341. A coiled-coil region spans residues 1255 to 1405 (EKLDYETQSL…SQIPELNNQV (151 aa)). Residues 1406-1432 (CGKPGDPCDSLCGGAGCGHCGGFLSCE) are domain alpha. The segment at 1433–1788 (HGAKTHSEEA…RGSHYRQCYT (356 aa)) is domain I. The stretch at 1453-1505 (ITSKKDQADQTIRALTQAKLNASEAYEKAKRGFEQSERYLNQTNANIKLAENL) forms a coiled coil. 3 N-linked (GlcNAc...) asparagine glycosylation sites follow: asparagine 1473, asparagine 1493, and asparagine 1515. Residues 1540–1561 (EEIETLGDQINRAVSSLKNVEA) are a coiled coil. N-linked (GlcNAc...) asparagine glycosylation is found at asparagine 1581, asparagine 1644, and asparagine 1703. The stretch at 1608–1762 (QGKAKDAIQQ…QQLLRLQAEI (155 aa)) forms a coiled coil. The interval 1690–1719 (GEANNLQSATSATNQTLTDRASRSENARER) is disordered. The segment covering 1693–1708 (NNLQSATSATNQTLTD) has biased composition (polar residues). Over residues 1709–1719 (RASRSENARER) the composition is skewed to basic and acidic residues.

As to quaternary structure, laminin is a complex glycoprotein, consisting of three different polypeptide chains (alpha, beta, gamma), which are bound to each other by disulfide bonds into a cross-shaped molecule comprising one long and three short arms with globules at each end. Found in the basement membranes (major component).

It is found in the secreted. Its subcellular location is the extracellular space. It localises to the extracellular matrix. The protein localises to the basement membrane. In terms of biological role, binding to cells via a high affinity receptor, laminin is thought to mediate the attachment, migration and organization of cells into tissues during embryonic development by interacting with other extracellular matrix components. Required for Ndg localization to the basement membrane. This is Laminin subunit beta-1 (LanB1) from Drosophila melanogaster (Fruit fly).